The following is a 250-amino-acid chain: Deoxynucleoside-5'-monophosphate kinase (250 aa).

Residues glycine 14, aspartate 16, and threonine 17 each contribute to the ATP site. DGMP-binding residues include valine 44, lysine 65, arginine 130, glycine 137, threonine 138, tryptophan 150, aspartate 170, arginine 172, glutamate 176, and serine 210.

The protein belongs to the dNMP kinase family. Monomer.

The enzyme catalyses a 2'-deoxyribonucleoside 5'-phosphate + ATP = a 2'-deoxyribonucleoside 5'-diphosphate + ADP. Allows the synthesis of deoxyribonucleoside triphosphates necessary for the rapid viral DNA replication. Phosphorylates all four dNMPs. The enzyme had the highest activity with dAMP and had about 30% less activity with dTMP and dGMP, respectively. The lowest activity was observed with dCMP as the substrate (about 35% of that with dAMP). In Escherichia coli (Enterobacteria phage T5), this protein is Deoxynucleoside-5'-monophosphate kinase.